The following is a 252-amino-acid chain: MELVGFLCVAVAVLTWGFLRVWNSAERMRSPEQAGLPGAGSRALVVIAHPDDEAMFFAPTMLGLARLEQQVSLLCFSSGNYYNQGEIRKKELLQSCAVLGIPPSRVMIIDKRDFPDDPEVQWDTELVASTLLQHIHANGTDLVVTFDAEGVSGHSNHIALYKAVRALHSGGKLPKGCSVLTLQSVNALRKYAFLLDLPWTLLSPQDVLFVLTSKEVAQAKKAMSCHRSQLLWFRYLYVLFSRYMRINSLRFL.

The chain crosses the membrane as a helical span at residues glutamate 2–tryptophan 22. Over asparagine 23–leucine 252 the chain is Cytoplasmic.

Belongs to the PIGL family.

It localises to the endoplasmic reticulum membrane. The catalysed reaction is a 6-(N-acetyl-alpha-D-glucosaminyl)-1-(1,2-diacyl-sn-glycero-3-phospho)-1D-myo-inositol + H2O = a 6-(alpha-D-glucosaminyl)-1-(1,2-diacyl-sn-glycero-3-phospho)-1D-myo-inositol + acetate. It functions in the pathway glycolipid biosynthesis; glycosylphosphatidylinositol-anchor biosynthesis. Catalyzes the second step of glycosylphosphatidylinositol (GPI) biosynthesis, which is the de-N-acetylation of N-acetylglucosaminyl-phosphatidylinositol. The sequence is that of N-acetylglucosaminyl-phosphatidylinositol de-N-acetylase (Pigl) from Mus musculus (Mouse).